The chain runs to 620 residues: UDP-glucose:protein N-beta-glucosyltransferase (620 aa).

The protein belongs to the glycosyltransferase 41 family.

The protein localises to the cytoplasm. It catalyses the reaction L-asparaginyl-[protein] + UDP-alpha-D-glucose = N(4)-(beta-D-glucosyl)-L-asparaginyl-[protein] + UDP + H(+). It participates in protein modification; protein glycosylation. Inverting glycosyltransferase that catalyzes the transfer of one glucose moiety from UDP-glucose to an asparagine residue in peptides and proteins containing the NX(S/T) motif, resulting in their modification with a beta-linked 1,N-glucose. Likely acts as a key component of a general protein glycosylation system. This chain is UDP-glucose:protein N-beta-glucosyltransferase, found in Actinobacillus pleuropneumoniae serotype 5b (strain L20).